A 66-amino-acid polypeptide reads, in one-letter code: Large ribosomal subunit protein bL35 (66 aa).

Composition is skewed to basic residues over residues 1 to 15 and 27 to 40; these read MPKLKTKSGAKKRFK and AGKRHGMIKRTKKQ. Residues 1-40 are disordered; sequence MPKLKTKSGAKKRFKVTGTGKVMSAHAGKRHGMIKRTKKQ.

This sequence belongs to the bacterial ribosomal protein bL35 family.

The chain is Large ribosomal subunit protein bL35 from Rhodopseudomonas palustris (strain BisA53).